Reading from the N-terminus, the 216-residue chain is Guanylate kinase (216 aa).

Residues 15–193 (GNLFMVVAPS…ALEELRNVVR (179 aa)) form the Guanylate kinase-like domain. An ATP-binding site is contributed by 22 to 29 (APSGAGKS).

This sequence belongs to the guanylate kinase family.

Its subcellular location is the cytoplasm. The catalysed reaction is GMP + ATP = GDP + ADP. In terms of biological role, essential for recycling GMP and indirectly, cGMP. This Cupriavidus pinatubonensis (strain JMP 134 / LMG 1197) (Cupriavidus necator (strain JMP 134)) protein is Guanylate kinase.